The chain runs to 191 residues: Prophage tail fiber assembly protein homolog TfaR (191 aa).

This sequence belongs to the tfa family.

This is Prophage tail fiber assembly protein homolog TfaR (tfaR) from Escherichia coli (strain K12).